A 373-amino-acid polypeptide reads, in one-letter code: UDP-3-O-acylglucosamine N-acyltransferase 2 (373 aa).

The active-site Proton acceptor is the H257. Residues 346 to 373 (DGRTAASAEAAAPSSDATGVDQPDQAAS) form a disordered region. Over residues 350–362 (AASAEAAAPSSDA) the composition is skewed to low complexity.

This sequence belongs to the transferase hexapeptide repeat family. LpxD subfamily. As to quaternary structure, homotrimer.

The catalysed reaction is a UDP-3-O-[(3R)-3-hydroxyacyl]-alpha-D-glucosamine + a (3R)-hydroxyacyl-[ACP] = a UDP-2-N,3-O-bis[(3R)-3-hydroxyacyl]-alpha-D-glucosamine + holo-[ACP] + H(+). The protein operates within bacterial outer membrane biogenesis; LPS lipid A biosynthesis. In terms of biological role, catalyzes the N-acylation of UDP-3-O-acylglucosamine using 3-hydroxyacyl-ACP as the acyl donor. Is involved in the biosynthesis of lipid A, a phosphorylated glycolipid that anchors the lipopolysaccharide to the outer membrane of the cell. This Rhodopseudomonas palustris (strain BisB18) protein is UDP-3-O-acylglucosamine N-acyltransferase 2.